The chain runs to 391 residues: Na(+)/H(+) antiporter NhaA (391 aa).

11 helical membrane-spanning segments follow: residues Gly-14–Thr-34, Met-59–Val-79, Ala-95–Phe-115, Gly-125–Gly-145, Ile-154–Phe-174, Ser-180–Phe-200, Val-219–Leu-239, Val-254–Val-274, Ile-292–Leu-312, Ile-328–Leu-348, and Leu-357–Tyr-377.

Belongs to the NhaA Na(+)/H(+) (TC 2.A.33) antiporter family.

It is found in the cell inner membrane. It catalyses the reaction Na(+)(in) + 2 H(+)(out) = Na(+)(out) + 2 H(+)(in). In terms of biological role, na(+)/H(+) antiporter that extrudes sodium in exchange for external protons. This is Na(+)/H(+) antiporter NhaA from Enterobacter sp. (strain 638).